The chain runs to 345 residues: Biotin synthase (345 aa).

A Radical SAM core domain is found at 38–256 (QQVQVSTLLS…IAVARIMMPS (219 aa)). Residues Cys53, Cys57, and Cys60 each contribute to the [4Fe-4S] cluster site. [2Fe-2S] cluster-binding residues include Cys97, Cys128, Cys188, and Arg260.

This sequence belongs to the radical SAM superfamily. Biotin synthase family. As to quaternary structure, homodimer. It depends on [4Fe-4S] cluster as a cofactor. [2Fe-2S] cluster is required as a cofactor.

The catalysed reaction is (4R,5S)-dethiobiotin + (sulfur carrier)-SH + 2 reduced [2Fe-2S]-[ferredoxin] + 2 S-adenosyl-L-methionine = (sulfur carrier)-H + biotin + 2 5'-deoxyadenosine + 2 L-methionine + 2 oxidized [2Fe-2S]-[ferredoxin]. It participates in cofactor biosynthesis; biotin biosynthesis; biotin from 7,8-diaminononanoate: step 2/2. Catalyzes the conversion of dethiobiotin (DTB) to biotin by the insertion of a sulfur atom into dethiobiotin via a radical-based mechanism. In Photorhabdus laumondii subsp. laumondii (strain DSM 15139 / CIP 105565 / TT01) (Photorhabdus luminescens subsp. laumondii), this protein is Biotin synthase.